Here is a 158-residue protein sequence, read N- to C-terminus: NADH-quinone oxidoreductase subunit B (158 aa).

C37, C38, C102, and C132 together coordinate [4Fe-4S] cluster.

Belongs to the complex I 20 kDa subunit family. As to quaternary structure, NDH-1 is composed of 14 different subunits. Subunits NuoB, C, D, E, F, and G constitute the peripheral sector of the complex. [4Fe-4S] cluster serves as cofactor.

It is found in the cell inner membrane. The catalysed reaction is a quinone + NADH + 5 H(+)(in) = a quinol + NAD(+) + 4 H(+)(out). NDH-1 shuttles electrons from NADH, via FMN and iron-sulfur (Fe-S) centers, to quinones in the respiratory chain. Couples the redox reaction to proton translocation (for every two electrons transferred, four hydrogen ions are translocated across the cytoplasmic membrane), and thus conserves the redox energy in a proton gradient. This is NADH-quinone oxidoreductase subunit B from Legionella pneumophila (strain Paris).